A 980-amino-acid chain; its full sequence is MDYNLYDFLPLYHPVQTPAFDRDVNSLSEFTQYELPREEEFPQNPGDLMLHQKLISNFINPHTLYDGVLLVHEMGTGKTCTSVAVAEEFIKNNYSSGETYPYTMVKKIIVLTKGKGLQNNFVNEIANVCTWGQYLEGLDRYIRNRDKKIKKNVKVHYTFDTFEIFAKNLAKMSTNEKRMTYENSLFIVDEAHNLRLHSDPEEGNIYSEIYDLFHLLKSRKILLLTGTPMKDRPEEIIDLFNLILRTPLSVEDLDQPEQFKRKINGHVSYLRAMISDVDRREMGKKLGSLNHFRVQPVVMGDFQSQIYQLAKAKDDEEKSIFNNSRQSSAMVFPDGTYGKQGFEANILPTTSGHKLKPEIRDELRLNLRKYSAKYADLIDRLKVDYTEGRLSFVFSEFVKGSGLVALGLLLELNGYVKATPSSNFAKPQKRYAIFTNETSTDAQTKQLISAFNNPKNLKGEYISTILGSRVIMEGFSFKNIQSEYILSPHWNYSETSQIIARGLRLGSHNDLKKNNIKFEVRIYHYVSLANKNYPAESIDLHMYEIAEEKDLEIQKILRYIKEAAFDCRLNQQRNTITNRKFDGTRNCEYSSCSYECSNQVDIGHDNRNYRLLYFQSADQYEKLKATIIETASRQPFTIEQIVAETKHSEFEVMTVIESLLNYRKVLFTRPEGYYYLSNIKNLFFASNVVFDRDKHYDSNDPTLLNYYTKYTTVYMGKSIGQLIQENQQKYMVFLVKKIFKSKNLVELQKYMVQLPIYLQEKLLSYSISVRHQDIKNNFVRDMVLNNFKLYYKIQDPQAFIWLNPENFLCTANYRDPDQWKPCTPSQQRDIEYMKRDRANIKVSNNSYGFIGLLNRKTNDFCLKKLQGPTLSDEPTDKRKRNVGKRCQNWKKVDLVDLVANKLKVVPDEDFDFTAEDANTVKNNPKFKKLVTPEMDQNDLKRLAFWNAQDVNHLCRTTLTQFTAQKLVVDDPNCGTANKIR.

The 188-residue stretch at 59–246 (INPHTLYDGV…IDLFNLILRT (188 aa)) folds into the Helicase ATP-binding domain. 72–79 (HEMGTGKT) contacts ATP. Positions 189–192 (DEAH) match the DEAH box motif. Residues 389-546 (RLSFVFSEFV…SIDLHMYEIA (158 aa)) enclose the Helicase C-terminal domain.

It belongs to the IIV-6 022L family. SNF2/RAD54 helicase subfamily.

The protein is Putative helicase 087L of Invertebrate iridescent virus 3 (IIV-3).